A 391-amino-acid chain; its full sequence is Acridone synthase 2 (391 aa).

The active site involves Cys164.

The protein belongs to the thiolase-like superfamily. Chalcone/stilbene synthases family. In terms of assembly, homodimer.

It carries out the reaction N-methylanthraniloyl-CoA + 3 malonyl-CoA + 3 H(+) = 1,3-dihydroxy-N-methylacridone + 3 CO2 + 4 CoA + H2O. The polypeptide is Acridone synthase 2 (ACS2) (Ruta graveolens (Common rue)).